An 88-amino-acid chain; its full sequence is Small ribosomal subunit protein bS20 (88 aa).

The segment at 1–28 is disordered; that stretch reads MANIKSQIKRNKTNEKARLRNKAVKSSL.

The protein belongs to the bacterial ribosomal protein bS20 family.

Functionally, binds directly to 16S ribosomal RNA. This is Small ribosomal subunit protein bS20 from Streptomyces avermitilis (strain ATCC 31267 / DSM 46492 / JCM 5070 / NBRC 14893 / NCIMB 12804 / NRRL 8165 / MA-4680).